We begin with the raw amino-acid sequence, 174 residues long: Thiol-disulfide oxidoreductase ResA (174 aa).

Residues 11-30 (TVILLLLLAALGYTIYANFF) form a helical; Signal-anchor for type II membrane protein membrane-spanning segment. The Thioredoxin domain occupies 36–174 (VAVGSTAPDF…IKQHLESIKP (139 aa)). C74 and C77 are joined by a disulfide.

It belongs to the thioredoxin family. ResA subfamily.

The protein resides in the cell membrane. It functions in the pathway protein modification; cytochrome c assembly. Its function is as follows. Thiol-disulfide oxidoreductase which is required in disulfide reduction during c-type cytochrome synthesis. May accept reducing equivalents from CcdA, leading to breakage of disulfide bonds in apocytochrome c; following this reduction heme can be covalently attached. This Geobacillus thermodenitrificans (strain NG80-2) protein is Thiol-disulfide oxidoreductase ResA.